An 809-amino-acid polypeptide reads, in one-letter code: Trimethylamine-N-oxide reductase 2 (809 aa).

The segment at residues 1–31 is a signal peptide (tat-type signal); that stretch reads MTLTRREFIKHSGIAAGTLVVTSAAPLPAWA. Residue Ser-176 coordinates Mo-bis(molybdopterin guanine dinucleotide).

It belongs to the prokaryotic molybdopterin-containing oxidoreductase family. Requires Mo-bis(molybdopterin guanine dinucleotide) as cofactor. Post-translationally, predicted to be exported by the Tat system. The position of the signal peptide cleavage has not been experimentally proven.

It localises to the periplasm. It catalyses the reaction trimethylamine + 2 Fe(III)-[cytochrome c] + H2O = trimethylamine N-oxide + 2 Fe(II)-[cytochrome c] + 3 H(+). Its function is as follows. Reduces trimethylamine-N-oxide (TMAO) into trimethylamine; an anaerobic reaction coupled to energy-yielding reactions. Can also reduce other N- and S-oxide compounds such as 4-methylmorpholine-N-oxide and biotin sulfoxide (BSO), but with a lower catalytic efficiency. This is Trimethylamine-N-oxide reductase 2 (torZ) from Escherichia coli O6:H1 (strain CFT073 / ATCC 700928 / UPEC).